Here is a 693-residue protein sequence, read N- to C-terminus: MDILKLLSRGTKKTQKGSQNAFNPQQKLPSAGTSTNPQLYHDQVRGHKRKRTKNESEPEAKVDLPEVDFFAPKPEPVAEAPVEVDEPVQAPKPTRSSRLLSEDECRQLLRSHRLKITLLSKTEDQSKVKKSKKKKKAAVEVKKDSKKQLFPQPLDSFGELRNAYGLSDKVADNLVFQGYRVPTEVQMGSLPLLVHPQAALKDEDGLDGGVDFLAIAPTGSGKTISFLIPAINNILRRRSEENTGNIHELEAVIVAPTRELVHQIVSEGQKLCKGTGLKVVSMKKHTHLSADQVDMAEDSSEDEEDKESESEDDDKKPSDDKPKQITTPDILVTTPFLLFKFLTSGPPSTQKVLPTVRDLILDEADVLLDPLFRDATMADWTACTNTNLRVSFWSATMGSNIESMVTEKLTSRAQSLDITPKPFVRLVVGLKDTAVPNIAHKLIYTASEQGKLLALRQLLHPTASDDSGPPLRPPFLVFTQTIDRATALHEELQYDIPLEAGGAARIAALHSGLTDSARSSIMRKFRAGDIWILITTDVLARGVDFAGVNGVVNYDVPGSSAGYVHRAGRTGRAGREGGIAVTFYTKEDIPFVKMVANVIAVSEKQAGKTGDEAGVQKWLLDALPNVRKADRKKLKERGNEARRSGVKSKISSKSGYERRRENNRLGAIEGSKKRKLQANDDSGDDGEWGGIDD.

The interval 1 to 101 is disordered; it reads MDILKLLSRG…KPTRSSRLLS (101 aa). Residues 16 to 38 show a composition bias toward polar residues; it reads KGSQNAFNPQQKLPSAGTSTNPQ. The span at 53–64 shows a compositional bias: basic and acidic residues; that stretch reads KNESEPEAKVDL. Low complexity predominate over residues 77 to 91; sequence VAEAPVEVDEPVQAP. The short motif at 159-187 is the Q motif element; it reads ELRNAYGLSDKVADNLVFQGYRVPTEVQM. The 213-residue stretch at 203–415 folds into the Helicase ATP-binding domain; sequence EDGLDGGVDF…TEKLTSRAQS (213 aa). 216–223 serves as a coordination point for ATP; sequence APTGSGKT. The segment at 288-326 is disordered; the sequence is LSADQVDMAEDSSEDEEDKESESEDDDKKPSDDKPKQIT. Residues 294–312 are compositionally biased toward acidic residues; the sequence is DMAEDSSEDEEDKESESED. Residues 313 to 323 are compositionally biased toward basic and acidic residues; sequence DDKKPSDDKPK. Positions 362–365 match the DEAD box motif; that stretch reads DEAD. One can recognise a Helicase C-terminal domain in the interval 454–623; sequence ALRQLLHPTA…GVQKWLLDAL (170 aa). A disordered region spans residues 631 to 693; the sequence is RKKLKERGNE…DDGEWGGIDD (63 aa). Over residues 681-693 the composition is skewed to acidic residues; the sequence is DSGDDGEWGGIDD.

It belongs to the DEAD box helicase family. DDX52/ROK1 subfamily. Interacts with the U3 snoRNA and is associated with the 90S and 40S pre-ribosomes.

It is found in the nucleus. Its subcellular location is the nucleolus. The enzyme catalyses ATP + H2O = ADP + phosphate + H(+). Its function is as follows. ATP-dependent RNA helicase involved in 40S ribosomal subunit biogenesis. Required for the processing and cleavage of 35S pre-rRNA at sites A0, A1, and A2, leading to mature 18S rRNA. The chain is ATP-dependent RNA helicase ROK1 (ROK1) from Gibberella zeae (strain ATCC MYA-4620 / CBS 123657 / FGSC 9075 / NRRL 31084 / PH-1) (Wheat head blight fungus).